Consider the following 986-residue polypeptide: Translation initiation factor IF-2 (986 aa).

The tract at residues 95–394 is disordered; it reads TFVRRDETSA…GRGKHQDQNT (300 aa). A compositionally biased stretch (basic and acidic residues) spans 122–182; the sequence is ELQRREEEAR…EEEAAKKRAA (61 aa). Low complexity predominate over residues 183–222; the sequence is AEAAAREQAQAAKPAQAAQPAAAKAEPVAAKAAEPAVAKQ. Residues 228 to 277 are compositionally biased toward basic and acidic residues; it reads ERAAAERAAQREAAKKAEDAARQAAEKARAEQEQIAKRRAAAEAEARAIR. Residues 320–342 show a composition bias toward low complexity; it reads APSRPAAKKPAAAAPAATTTPSA. The segment covering 371–384 has biased composition (gly residues); sequence TSGGVDRGWRGGPK. Residues 486 to 655 form the tr-type G domain; sequence PRPPVVTVMG…LLQAEVLELK (170 aa). The interval 495–502 is G1; sequence GHVDHGKT. 495-502 contributes to the GTP binding site; it reads GHVDHGKT. The G2 stretch occupies residues 520 to 524; the sequence is GITQH. The G3 stretch occupies residues 541-544; sequence DTPG. Residues 541–545 and 595–598 contribute to the GTP site; these read DTPGH and NKID. A G4 region spans residues 595 to 598; it reads NKID. The G5 stretch occupies residues 631–633; that stretch reads SAK.

It belongs to the TRAFAC class translation factor GTPase superfamily. Classic translation factor GTPase family. IF-2 subfamily.

The protein localises to the cytoplasm. Its function is as follows. One of the essential components for the initiation of protein synthesis. Protects formylmethionyl-tRNA from spontaneous hydrolysis and promotes its binding to the 30S ribosomal subunits. Also involved in the hydrolysis of GTP during the formation of the 70S ribosomal complex. The polypeptide is Translation initiation factor IF-2 (Paraburkholderia phytofirmans (strain DSM 17436 / LMG 22146 / PsJN) (Burkholderia phytofirmans)).